A 303-amino-acid polypeptide reads, in one-letter code: Polyisoprenyl-teichoic acid--peptidoglycan teichoic acid transferase TagU (303 aa).

Over 1 to 4 (MKKK) the chain is Cytoplasmic. The chain crosses the membrane as a helical; Signal-anchor for type II membrane protein span at residues 5–25 (ILFWVLGILGVLIIGGGIYAY). At 26 to 303 (NVYSSVSNTL…KLRTHLEVTK (278 aa)) the chain is on the extracellular side.

This sequence belongs to the LytR/CpsA/Psr (LCP) family.

The protein localises to the cell membrane. It functions in the pathway cell wall biogenesis. Functionally, may catalyze the final step in cell wall teichoic acid biosynthesis, the transfer of the anionic cell wall polymers (APs) from their lipid-linked precursor to the cell wall peptidoglycan (PG). In Bacillus cereus (strain ZK / E33L), this protein is Polyisoprenyl-teichoic acid--peptidoglycan teichoic acid transferase TagU.